The primary structure comprises 328 residues: GTPase Obg (328 aa).

In terms of domain architecture, Obg spans 2–160 (YNFKDSVNIT…LSVRLELFLV (159 aa)). The OBG-type G domain maps to 161–326 (ADIGLVGLPN…LIKEFFILAK (166 aa)). GTP contacts are provided by residues 167 to 174 (GLPNAGKS), 192 to 196 (FTTKI), 213 to 216 (DIPG), 280 to 283 (NKLD), and 307 to 309 (SIY). Residues S174 and T194 each coordinate Mg(2+).

The protein belongs to the TRAFAC class OBG-HflX-like GTPase superfamily. OBG GTPase family. In terms of assembly, monomer. Requires Mg(2+) as cofactor.

Its subcellular location is the cytoplasm. An essential GTPase which binds GTP, GDP and possibly (p)ppGpp with moderate affinity, with high nucleotide exchange rates and a fairly low GTP hydrolysis rate. Plays a role in control of the cell cycle, stress response, ribosome biogenesis and in those bacteria that undergo differentiation, in morphogenesis control. The polypeptide is GTPase Obg (Borreliella burgdorferi (strain ATCC 35210 / DSM 4680 / CIP 102532 / B31) (Borrelia burgdorferi)).